Consider the following 1118-residue polypeptide: Carbamoyl phosphate synthase arginine-specific large chain (1118 aa).

Residues 23–420 form a carboxyphosphate synthetic domain region; the sequence is QLVEGVNSVL…AFQKALRQVD (398 aa). 12 residues coordinate ATP: Arg150, Arg190, Gly196, Gly197, Lys227, Leu229, Glu234, Gly260, Val261, His262, Gln303, and Glu317. The ATP-grasp 1 domain maps to 154–346; sequence ASALKDINIP…LAYTAAKIGL (193 aa). Mg(2+)-binding residues include Gln303, Glu317, and Asn319. Mn(2+) is bound by residues Gln303, Glu317, and Asn319. The segment at 421 to 573 is oligomerization domain; it reads PSLLGFQGST…YTTYNATKND (153 aa). The segment at 574-958 is carbamoyl phosphate synthetic domain; it reads VEFNENGMLV…SYWTAIQSTM (385 aa). The region spanning 698 to 890 is the ATP-grasp 2 domain; sequence SSILDSIDVD…FIEIAVKAFL (193 aa). Arg734, Lys773, Ile775, Glu780, Gly805, Val806, His807, Ser808, Gln848, and Glu861 together coordinate ATP. The Mg(2+) site is built by Gln848, Glu861, and Asn863. Mn(2+) contacts are provided by Gln848, Glu861, and Asn863. The interval 959 to 1102 is allosteric domain; the sequence is NFHVPLPPSG…KILESHDVIV (144 aa). In terms of domain architecture, MGS-like spans 960-1118; that stretch reads FHVPLPPSGI…WDEFIGFKAY (159 aa).

The protein belongs to the CarB family. Heterodimer composed of 2 chains; the small (or glutamine) chain promotes the hydrolysis of glutamine to ammonia, which is used by the large (or ammonia) chain to synthesize carbamoyl phosphate. The cofactor is Mg(2+). It depends on Mn(2+) as a cofactor.

The protein localises to the cytoplasm. It catalyses the reaction hydrogencarbonate + L-glutamine + 2 ATP + H2O = carbamoyl phosphate + L-glutamate + 2 ADP + phosphate + 2 H(+). It carries out the reaction hydrogencarbonate + NH4(+) + 2 ATP = carbamoyl phosphate + 2 ADP + phosphate + 2 H(+). Its pathway is amino-acid biosynthesis; L-arginine biosynthesis; carbamoyl phosphate from bicarbonate: step 1/1. Functionally, large subunit of the arginine-specific carbamoyl phosphate synthase (CPSase). CPSase catalyzes the formation of carbamoyl phosphate from the ammonia moiety of glutamine, hydrogencarbonate, and phosphate donated by ATP, constituting the first step of 2 biosynthetic pathways, one leading to arginine and/or urea and the other to pyrimidine nucleotides. The large subunit (synthetase) binds the substrates ammonia (free or transferred from glutamine from the small subunit), hydrogencarbonate and ATP and carries out an ATP-coupled ligase reaction, activating hydrogencarbonate by forming carboxy phosphate which reacts with ammonia to form carbamoyl phosphate. The protein is Carbamoyl phosphate synthase arginine-specific large chain (CPA2) of Saccharomyces cerevisiae (strain ATCC 204508 / S288c) (Baker's yeast).